An 81-amino-acid polypeptide reads, in one-letter code: Serine protease inhibitor Kazal-type 2 (81 aa).

A signal peptide spans 1–21; sequence MALAVLRLALLLLAVTFAGPL. Residues 27–81 enclose the Kazal-like domain; sequence KYKTPFCARYQLPGCPRDFNPVCGTDMITYPNECTLCMKIRESGQNIKILRRGPC. Intrachain disulfides connect cysteine 33/cysteine 63, cysteine 41/cysteine 60, and cysteine 49/cysteine 81.

As to expression, more abundant in epididymis than in testis.

It localises to the secreted. It is found in the cytoplasmic vesicle. Its subcellular location is the secretory vesicle. The protein resides in the acrosome. Its function is as follows. Strong inhibitor of acrosin in male and/or female genital tract. Also inhibits trypsin. Functionally, as a strong inhibitor of acrosin, it is required for normal spermiogenesis. It probably hinders premature activation of proacrosin and other proteases, thus preventing the cascade of events leading to spermiogenesis defects. May be involved in the regulation of serine protease-dependent germ cell apoptosis. It also inhibits trypsin. This is Serine protease inhibitor Kazal-type 2 (SPINK2) from Macaca fascicularis (Crab-eating macaque).